The following is an 87-amino-acid chain: Small ribosomal subunit protein bS20 (87 aa).

The protein belongs to the bacterial ribosomal protein bS20 family.

In terms of biological role, binds directly to 16S ribosomal RNA. This is Small ribosomal subunit protein bS20 from Finegoldia magna (strain ATCC 29328 / DSM 20472 / WAL 2508) (Peptostreptococcus magnus).